The chain runs to 1247 residues: ABC transporter B family member 14 (1247 aa).

The ABC transmembrane type-1 1 domain occupies 48 to 337 (MFLGGLGTCI…AVPSLSAISK (290 aa)). 6 consecutive transmembrane segments (helical) span residues 49–69 (FLGGLGTCIHGGTLPLFFVFF), 95–115 (LYLVYLGLVNLVSAWIGVACW), 172–192 (HVLRYLCQFIAGFVIGFLSVW), 196–216 (LLTLGVVPLIAIAGGGYAIVM), 277–297 (LGVGLTYSLLFCAWALLFWYA), and 315–335 (ILNVIYSGFALGQAVPSLSAI). 2 N-linked (GlcNAc...) asparagine glycosylation sites follow: asparagine 362 and asparagine 392. An ABC transporter 1 domain is found at 373–608 (IEFCGVSFAY…GGDYATLVNC (236 aa)). 407 to 414 (GPSGSGKS) contacts ATP. Positions 679–971 (EWLYALLGSI…TLALTPDIVK (293 aa)) constitute an ABC transmembrane type-1 2 domain. Transmembrane regions (helical) follow at residues 680-700 (WLYALLGSIGAVLAGSQPALF) and 727-747 (AIIFVGAGIVTAPIYILQHYF). Asparagine 780 carries an N-linked (GlcNAc...) asparagine glycan. The next 3 membrane-spanning stretches (helical) occupy residues 807 to 824 (IVQNLSLTITALALAFFY), 830 to 850 (AVVTACFPLLIAASLTEQLFL), and 915 to 935 (LSQCLAFCSYALGLWYISVLI). N-linked (GlcNAc...) asparagine glycosylation is present at asparagine 938. The helical transmembrane segment at 949–969 (FMVLLVTAYSVAETLALTPDI) threads the bilayer. The ABC transporter 2 domain maps to 1006 to 1242 (IEFRNVSFAY…SDGFYKKLTS (237 aa)). N-linked (GlcNAc...) asparagine glycosylation is present at asparagine 1010. 1041–1048 (GPSGSGKS) contributes to the ATP binding site. The N-linked (GlcNAc...) asparagine glycan is linked to asparagine 1108.

It belongs to the ABC transporter superfamily. ABCB family. Multidrug resistance exporter (TC 3.A.1.201) subfamily.

The protein localises to the membrane. The chain is ABC transporter B family member 14 (ABCB14) from Arabidopsis thaliana (Mouse-ear cress).